The chain runs to 166 residues: Small ribosomal subunit protein uS5 (166 aa).

The 64-residue stretch at 12-75 (YIEKLVQVNR…EAARRNMIQV (64 aa)) folds into the S5 DRBM domain.

The protein belongs to the universal ribosomal protein uS5 family. In terms of assembly, part of the 30S ribosomal subunit. Contacts proteins S4 and S8.

In terms of biological role, with S4 and S12 plays an important role in translational accuracy. Located at the back of the 30S subunit body where it stabilizes the conformation of the head with respect to the body. The chain is Small ribosomal subunit protein uS5 from Pseudomonas syringae pv. tomato (strain ATCC BAA-871 / DC3000).